Consider the following 331-residue polypeptide: Adenosine deaminase (331 aa).

The Zn(2+) site is built by His12 and His14. 3 residues coordinate substrate: His14, Asp16, and Gly170. His197 lines the Zn(2+) pocket. Glu200 functions as the Proton donor in the catalytic mechanism. Asp278 lines the Zn(2+) pocket. Asp279 is a substrate binding site.

The protein belongs to the metallo-dependent hydrolases superfamily. Adenosine and AMP deaminases family. Adenosine deaminase subfamily. The cofactor is Zn(2+).

It carries out the reaction adenosine + H2O + H(+) = inosine + NH4(+). It catalyses the reaction 2'-deoxyadenosine + H2O + H(+) = 2'-deoxyinosine + NH4(+). Its function is as follows. Catalyzes the hydrolytic deamination of adenosine and 2-deoxyadenosine. This is Adenosine deaminase from Shewanella oneidensis (strain ATCC 700550 / JCM 31522 / CIP 106686 / LMG 19005 / NCIMB 14063 / MR-1).